We begin with the raw amino-acid sequence, 100 residues long: UPF0213 protein YhbQ (100 aa).

Residues 2-77 (TPWFLYLIRT…KQLTKRQKER (76 aa)) form the GIY-YIG domain.

It belongs to the UPF0213 family.

This is UPF0213 protein YhbQ from Escherichia coli O7:K1 (strain IAI39 / ExPEC).